Consider the following 329-residue polypeptide: DNA repair protein RAD51 homolog 4 (329 aa).

Residues M1–S83 form a preferentially binds ssDNA region. Residues L4–T77 form an interaction with XRCC2 region. Residues T77 to Q328 are interaction with RAD51C. G107–T114 lines the ATP pocket.

It belongs to the RecA family. RAD51 subfamily. As to quaternary structure, part of the BCDX2 complex consisting of RAD51B, RAD51C, RAD51D and XRCC2; the complex has a ring-like structure arranged into a flat disc around a central channel. In the absence of DNA, the BCDX2 subcomplex XRCC2:RAD51D formed a multimeric ring structure; in the presence of single-stranded DNA it formed a filamentous structure with the ssDNA. Interacts with SWSAP1 and ZSWIM7; involved in homologous recombination repair. Interacts with BLM; required for stimulation of BLM activity by the BCDX2 subcomplex XRCC2:RAD51D. In terms of tissue distribution, highly expressed in brain followed by testis. Also expressed in heart, liver, kidney, spleen, lung and skeletal muscle.

The protein localises to the nucleus. It localises to the chromosome. It is found in the telomere. In terms of biological role, involved in the homologous recombination repair (HRR) pathway of double-stranded DNA breaks arising during DNA replication or induced by DNA-damaging agents. Bind to single-stranded DNA (ssDNA) and has DNA-dependent ATPase activity. Part of the RAD51 paralog protein complex BCDX2 which acts in the BRCA1-BRCA2-dependent HR pathway. Upon DNA damage, BCDX2 acts downstream of BRCA2 recruitment and upstream of RAD51 recruitment. BCDX2 binds predominantly to the intersection of the four duplex arms of the Holliday junction and to junction of replication forks. The BCDX2 complex was originally reported to bind single-stranded DNA, single-stranded gaps in duplex DNA and specifically to nicks in duplex DNA. Involved in telomere maintenance. The BCDX2 subcomplex XRCC2:RAD51D can stimulate Holliday junction resolution by BLM. The sequence is that of DNA repair protein RAD51 homolog 4 (Rad51d) from Mus musculus (Mouse).